A 102-amino-acid chain; its full sequence is Small ribosomal subunit protein uS10 (102 aa).

It belongs to the universal ribosomal protein uS10 family. As to quaternary structure, part of the 30S ribosomal subunit.

Functionally, involved in the binding of tRNA to the ribosomes. This is Small ribosomal subunit protein uS10 from Mycoplasma mycoides subsp. mycoides SC (strain CCUG 32753 / NCTC 10114 / PG1).